We begin with the raw amino-acid sequence, 104 residues long: Iron-sulfur cluster assembly protein CyaY (104 aa).

The protein belongs to the frataxin family.

Its function is as follows. Involved in iron-sulfur (Fe-S) cluster assembly. May act as a regulator of Fe-S biogenesis. This is Iron-sulfur cluster assembly protein CyaY from Rickettsia prowazekii (strain Madrid E).